Here is a 331-residue protein sequence, read N- to C-terminus: Type 2 lactosamine alpha-2,3-sialyltransferase (331 aa).

The Cytoplasmic portion of the chain corresponds to 1-4 (MRGY). The chain crosses the membrane as a helical; Signal-anchor for type II membrane protein span at residues 5–25 (LVAIFLSAVFLYYVLHCILWG). The Lumenal portion of the chain corresponds to 26–331 (TNVYWVAPVE…KNLVINLTQD (306 aa)). 6 N-linked (GlcNAc...) asparagine glycosylation sites follow: N129, N181, N282, N295, N308, and N327.

Belongs to the glycosyltransferase 29 family.

The protein localises to the golgi apparatus membrane. The catalysed reaction is a neolactoside nLc4Cer(d18:1(4E)) + CMP-N-acetyl-beta-neuraminate = a neolactoside IV(3)-alpha-NeuAc-nLc4Cer(d18:1(4E)) + CMP + H(+). It carries out the reaction a beta-D-galactosyl-(1-&gt;4)-N-acetyl-beta-D-glucosaminyl derivative + CMP-N-acetyl-beta-neuraminate = an N-acetyl-alpha-neuraminyl-(2-&gt;3)-beta-D-galactosyl-(1-&gt;4)-N-acetyl-beta-D-glucosaminyl derivative + CMP + H(+). The enzyme catalyses a neolactoside nLc6Cer(d18:1(4E)) + CMP-N-acetyl-beta-neuraminate = a neolactoside VI(3)-alpha-NeuNAc-nLc6Cer(d18:1(4E)) + CMP + H(+). Its function is as follows. Transfers the sialyl residue from CMP-N-acetyl-beta-neuraminate to the terminal galactose residue on sugar chains of glycoproteins and glycolipids. It's alpha-2,3-sialyltransferase activity is specific toward type II glycan chains (Galbeta1-4GlcNAc) on glycoproteins and glycolipids such as neolactosides nLc4Cer and nLc6Cer, whose sialyl-products serve as precursors for the Lewis X antigen. Critically involved in the synthesis of functional selectin ligands needed for neutrophil recruitment during inflammation and lymphocyte homing to the lymph nodes. The sequence is that of Type 2 lactosamine alpha-2,3-sialyltransferase (ST3GAL6) from Pan troglodytes (Chimpanzee).